The sequence spans 1458 residues: Probable serine/threonine-protein kinase yakA (1458 aa).

Residues 32 to 76 (NNSLNSNDNTNTTNNNNNNNNNNNNNNNNNNNNNNNNNINNNNNN) show a composition bias toward low complexity. The segment at 32–83 (NNSLNSNDNTNTTNNNNNNNNNNNNNNNNNNNNNNNNNINNNNNNGGMVGVN) is disordered. The 344-residue stretch at 205 to 548 (YKVLDSLGQG…PMQAKEHPFI (344 aa)) folds into the Protein kinase domain. ATP-binding positions include 211 to 219 (LGQGTFGQV) and lysine 234. Aspartate 332 acts as the Proton acceptor in catalysis. Disordered stretches follow at residues 441 to 462 (HRHL…NGKP) and 545 to 571 (HPFI…TYSQ). Residues 446–459 (SNSDDNNNNNNNNN) show a composition bias toward low complexity. Positions 588 to 643 (NQHQLFQQLQQQQQQQQQQQQQQQQQQQQQQQQQQQQQQHNQFQQQQQQQQQQQQS) form a coiled coil. Low complexity-rich tracts occupy residues 659–709 (TPYT…SFNF), 791–800 (SWGSDSSSIS), 808–853 (QKQM…NNVN), and 861–870 (DIPSDSFSSS). Disordered regions lie at residues 659–714 (TPYT…NESF) and 791–874 (SWGS…EGMD). Positions 878-927 (NLYQQQQQQQQQQQQQQQQQQQQQQQQQQQQQQQQQQLQYQQQFQTLQDL) form a coiled coil. Disordered stretches follow at residues 930–1095 (EGEK…PQMI), 1128–1161 (NQQN…GGAI), 1233–1347 (DYRP…SYQY), 1375–1399 (QQQQ…KTSS), and 1435–1458 (QQLQ…YRET). Low complexity-rich tracts occupy residues 961–988 (QQTN…QQQQ), 1016–1042 (QQFQ…RFMQ), and 1064–1093 (QPLH…FTPQ). Composition is skewed to polar residues over residues 1128–1158 (NQQN…NSSG) and 1233–1245 (DYRP…QSPP). 2 stretches are compositionally biased toward low complexity: residues 1246–1255 (SSYNSNKSFY) and 1264–1279 (NNNN…NFSN). The span at 1280–1291 (SLLPSQQQNVIF) shows a compositional bias: polar residues. A compositionally biased stretch (low complexity) spans 1292 to 1309 (PQNSPPSSYNSSNSLSKS). Composition is skewed to polar residues over residues 1310–1321 (GGNTVKNNSNTG) and 1331–1344 (QRFN…SGGS). 2 coiled-coil regions span residues 1346–1383 (QYQQ…KKDT) and 1409–1442 (RYQY…QQQA).

It belongs to the protein kinase superfamily. CMGC Ser/Thr protein kinase family. MNB/DYRK subfamily.

Its subcellular location is the cytoplasm. It carries out the reaction L-seryl-[protein] + ATP = O-phospho-L-seryl-[protein] + ADP + H(+). The enzyme catalyses L-threonyl-[protein] + ATP = O-phospho-L-threonyl-[protein] + ADP + H(+). It catalyses the reaction L-tyrosyl-[protein] + ATP = O-phospho-L-tyrosyl-[protein] + ADP + H(+). Functionally, general sensor of environmental conditions, such as heat stress, effecting changes through pkaC. Essential for survival to nitrosoative and oxidative stresses. Required for cell cycle control, not only at the onset but also during development (aggregation process and postaggregative development). The chain is Probable serine/threonine-protein kinase yakA (yakA) from Dictyostelium discoideum (Social amoeba).